The sequence spans 885 residues: MRPRGTPPSFLPLPVLLALAVIAAAGRAAPAAAAAPTADPAATPALPEDEEVPDEDGEGVATPAPAANASVEAGRATLREDLREIKARDGDATFYVCPPPTGATVVQFEQPRPCPRAPDGQNYTEGIAVVFKENIAPYKFKATMYYKDVTVSQVWFGHRYSQFMGIFEDRAPVPFEEVMDKINAKGVCRSTAKYVRNNMESTAFHRDDHESDMALKPAKAATRTSRGWHTTDLKYNPARVEAFHRYGTTVNCIVEEVEARSVYPYDEFVLATGDFVYMSPFYGYRDGSHGEHTAYAADRFRQVDGYYERDLSTGRRAAAPVTRNLLTTPKFTVGWDWAPKRPSVCTLTKWREVDEMLRAEYGPSFRFSSAALSTTFTANRTEYALSRVDLADCVGREAREAVDRIFLRRYNGTHVKVGQVQYYLATGGFLIAYQPLLSNALVELYVRELVREQTRRPAGGDPGEAATPGPSVDPPSVERIKTTSSVEFARLQFTYDHIQRHVNDMLGRIATAWCELQNRELTLWNEARRLNPGAIASATVGRRVSARMLGDVMAVSTCVPVAPDNVIMQNSIGVAARPGTCYSRPLVSFRYEADGPLVEGQLGEDNEIRLERDALEPCTVGHRRYFTFGAGYVYFEEYAYSHQLGRADVTTVSTFINLNLTMLEDHEFVPLEVYTRQEIKDSGLLDYTEVQRRNQLHALRFADIDTVIKADAHAALFAGLYSFFEGLGDVGRAVGKVVMGIVGGVVSAVSGVSSFLSNPFGALAVGLLVLAGLAAAFFAFRYVMRLQRNPMKALYPLTTKELKSDGAPLAGGGEDGAEDFDEAKLAQAREMIRYMALVSAMERTEHKARKKGTSALLSAKVTDAVMRKRARPRYSPLRDTDEEEL.

An N-terminal signal peptide occupies residues 1–34 (MRPRGTPPSFLPLPVLLALAVIAAAGRAAPAAAA). Residues 29 to 46 (APAAAAAPTADPAATPAL) are compositionally biased toward low complexity. Residues 29-74 (APAAAAAPTADPAATPALPEDEEVPDEDGEGVATPAPAANASVEAG) are disordered. At 35 to 759 (APTADPAATP…SGVSSFLSNP (725 aa)) the chain is on the virion surface side. Residues 47–58 (PEDEEVPDEDGE) show a composition bias toward acidic residues. 2 N-linked (GlcNAc...) asparagine; by host glycosylation sites follow: Asn-68 and Asn-122. 5 disulfides stabilise this stretch: Cys-97–Cys-558, Cys-114–Cys-514, Cys-188–Cys-252, Cys-345–Cys-393, and Cys-581–Cys-618. 2 involved in fusion and/or binding to host membrane regions span residues 154–160 (VWFGHRY) and 239–246 (RVEAFHRY). 2 N-linked (GlcNAc...) asparagine; by host glycosylation sites follow: Asn-379 and Asn-411. Positions 455 to 478 (RRPAGGDPGEAATPGPSVDPPSVE) are disordered. Asn-659 carries N-linked (GlcNAc...) asparagine; by host glycosylation. Hydrophobic membrane proximal region regions lie at residues 704–757 (IDTV…SFLS) and 716–756 (LFAG…SSFL). Residues 760–780 (FGALAVGLLVLAGLAAAFFAF) form a helical membrane-spanning segment. Residues 781–885 (RYVMRLQRNP…PLRDTDEEEL (105 aa)) lie on the Intravirion side of the membrane. Residues 834-837 (YMAL) carry the Golgi targeting motif. Residues 866-885 (MRKRARPRYSPLRDTDEEEL) are disordered. Positions 874–877 (YSPL) match the Internalization motif motif.

The protein belongs to the herpesviridae glycoprotein B family. Homotrimer; disulfide-linked. Binds to heparan sulfate proteoglycans. Interacts with gH/gL heterodimer.

It localises to the virion membrane. Its subcellular location is the host cell membrane. It is found in the host endosome membrane. The protein localises to the host Golgi apparatus membrane. Functionally, envelope glycoprotein that forms spikes at the surface of virion envelope. Essential for the initial attachment to heparan sulfate moieties of the host cell surface proteoglycans. Involved in fusion of viral and cellular membranes leading to virus entry into the host cell. Following initial binding to its host receptors, membrane fusion is mediated by the fusion machinery composed at least of gB and the heterodimer gH/gL. May be involved in the fusion between the virion envelope and the outer nuclear membrane during virion egress. The sequence is that of Envelope glycoprotein B from Herpes simplex virus type 2 (strain SA8) (Simian agent 8).